The sequence spans 258 residues: Deoxyribose-phosphate aldolase (258 aa).

Residue Asp-101 is the Proton donor/acceptor of the active site. Lys-166 (schiff-base intermediate with acetaldehyde) is an active-site residue. Lys-200 functions as the Proton donor/acceptor in the catalytic mechanism.

It belongs to the DeoC/FbaB aldolase family. DeoC type 2 subfamily.

The protein resides in the cytoplasm. The catalysed reaction is 2-deoxy-D-ribose 5-phosphate = D-glyceraldehyde 3-phosphate + acetaldehyde. The protein operates within carbohydrate degradation; 2-deoxy-D-ribose 1-phosphate degradation; D-glyceraldehyde 3-phosphate and acetaldehyde from 2-deoxy-alpha-D-ribose 1-phosphate: step 2/2. Functionally, catalyzes a reversible aldol reaction between acetaldehyde and D-glyceraldehyde 3-phosphate to generate 2-deoxy-D-ribose 5-phosphate. This Actinobacillus pleuropneumoniae serotype 5b (strain L20) protein is Deoxyribose-phosphate aldolase.